The sequence spans 313 residues: Protein sprouty homolog 1 (313 aa).

M1 is modified (N-acetylmethionine). A disordered region spans residues 43–152 (QIKAIRGSNE…RSDRVIRTQP (110 aa)). A compositionally biased stretch (basic and acidic residues) spans 69–79 (PRPEKQERTHE). The span at 106-125 (SRSTSTGSAASSGSSSSVSS) shows a compositional bias: low complexity. The region spanning 177–289 (QCGKCKCGEC…CYDWTHRPGC (113 aa)) is the SPR domain.

Belongs to the sprouty family. As to quaternary structure, forms heterodimers with SPRY2. Interacts with TESK1. Interacts with CAV1 (via C-terminus).

Its subcellular location is the cytoplasm. The protein resides in the membrane. Functionally, inhibits fibroblast growth factor (FGF)-induced retinal lens fiber differentiation, probably by inhibiting FGF-mediated phosphorylation of ERK1/2. Inhibits TGFB-induced epithelial-to-mesenchymal transition in lens epithelial cells. The sequence is that of Protein sprouty homolog 1 (Spry1) from Mus musculus (Mouse).